A 201-amino-acid polypeptide reads, in one-letter code: MQPFISHTGLAVILDSANVDTDQIIPKQFLSKVTRDGFGVHLFHDWRYLDEAGDKPNPDFNLNQPRYKGASILVSQENFGCGSSREHAPWALADFGFKVIIAPSFADIFYGNSINNGLLPVRLTDAEVKQLMAEVEAKEGAEIDVDLQALTVTSPSGALFHFEIAQSARHNLLNGLDAIGLTLSHVDTIANYEANIPSWRG.

The protein belongs to the LeuD family. LeuD type 1 subfamily. Heterodimer of LeuC and LeuD.

The enzyme catalyses (2R,3S)-3-isopropylmalate = (2S)-2-isopropylmalate. It participates in amino-acid biosynthesis; L-leucine biosynthesis; L-leucine from 3-methyl-2-oxobutanoate: step 2/4. Functionally, catalyzes the isomerization between 2-isopropylmalate and 3-isopropylmalate, via the formation of 2-isopropylmaleate. The polypeptide is 3-isopropylmalate dehydratase small subunit (Shewanella halifaxensis (strain HAW-EB4)).